The primary structure comprises 313 residues: Uracil-DNA glycosylase (313 aa).

The tract at residues 35-68 is disordered; it reads DEPMPKKCRRPAGPPKGFISTRGDTSPSSDNNHI. Residues 56–68 show a composition bias toward polar residues; the sequence is RGDTSPSSDNNHI. The active-site Proton acceptor is aspartate 153.

This sequence belongs to the uracil-DNA glycosylase (UDG) superfamily. UNG family.

It is found in the host nucleus. It carries out the reaction Hydrolyzes single-stranded DNA or mismatched double-stranded DNA and polynucleotides, releasing free uracil.. Excises uracil residues from the DNA which can arise as a result of misincorporation of dUMP residues by DNA polymerase or deamination of cytosines. Therefore may reduce deleterious uracil incorporation into the viral genome, particularly in terminally differentiated cells which lack DNA repair enzymes. This Gallus gallus (Chicken) protein is Uracil-DNA glycosylase (MDV014).